We begin with the raw amino-acid sequence, 512 residues long: 2,3-bisphosphoglycerate-independent phosphoglycerate mutase (512 aa).

Residues aspartate 12 and serine 62 each contribute to the Mn(2+) site. The active-site Phosphoserine intermediate is the serine 62. Residues histidine 123, arginine 153 to aspartate 154, arginine 185, arginine 191, arginine 260 to arginine 263, and lysine 333 each bind substrate. Mn(2+) contacts are provided by aspartate 400, histidine 404, aspartate 441, histidine 442, and histidine 460.

It belongs to the BPG-independent phosphoglycerate mutase family. In terms of assembly, monomer. Mn(2+) serves as cofactor.

It carries out the reaction (2R)-2-phosphoglycerate = (2R)-3-phosphoglycerate. It functions in the pathway carbohydrate degradation; glycolysis; pyruvate from D-glyceraldehyde 3-phosphate: step 3/5. Its function is as follows. Catalyzes the interconversion of 2-phosphoglycerate and 3-phosphoglycerate. The sequence is that of 2,3-bisphosphoglycerate-independent phosphoglycerate mutase from Clostridium perfringens (strain SM101 / Type A).